The primary structure comprises 499 residues: Endoglucanase 3 (499 aa).

An N-terminal signal peptide occupies residues Met1–Ala19. The active-site Nucleophile is the Asp88. Catalysis depends on residues His416, Asp467, and Glu476.

It belongs to the glycosyl hydrolase 9 (cellulase E) family. In terms of tissue distribution, expressed in flowers.

The protein resides in the secreted. It catalyses the reaction Endohydrolysis of (1-&gt;4)-beta-D-glucosidic linkages in cellulose, lichenin and cereal beta-D-glucans.. The protein is Endoglucanase 3 (GLU8) of Oryza sativa subsp. japonica (Rice).